A 205-amino-acid chain; its full sequence is HTH-type transcriptional regulator LuxR (205 aa).

Positions 15–75 (LKRKQQLMEI…EVLNHVVRQF (61 aa)) constitute an HTH tetR-type domain. Residues 39–58 (HADIAEIAQVSVATVFNYFP) constitute a DNA-binding region (H-T-H motif).

In terms of biological role, regulatory protein of bacterial bioluminescence. It probably binds the autoinducer molecule and potentiates the transcription of the bioluminescence operon. This chain is HTH-type transcriptional regulator LuxR (luxR), found in Vibrio harveyi (Beneckea harveyi).